The sequence spans 247 residues: Mannose-specific lectin CML-2 (247 aa).

Residues Asp87 and Gly107 each coordinate a carbohydrate. A glycan (N-linked (GlcNAc...) asparagine) is linked at Asn119. Glu129 and Asp131 together coordinate Mn(2+). 2 residues coordinate Ca(2+): Asp131 and Phe133. 2 residues coordinate a carbohydrate: Ser138 and Asn139. 2 residues coordinate Ca(2+): Asn139 and Asp142. Residues Asp142 and His147 each contribute to the Mn(2+) site. Positions 221, 222, and 223 each coordinate a carbohydrate.

Belongs to the leguminous lectin family. As to quaternary structure, homodimer; non-covalently linked. In terms of processing, glycosylated.

Its function is as follows. Mannose-specific lectin. Also binds alpha-methyl-D-mannoside, D-glucose, N-acetyl-D-glucosamine and sucrose but not D-galactose, D-arabinose, D-fructose, D-xylose, lactose or glycoproteins fetiun, PSM and ovalbumin. Shows agglutinating activity towards rabbit erythrocytes. The sequence is that of Mannose-specific lectin CML-2 from Centrolobium microchaete (Canarywood tree).